Reading from the N-terminus, the 130-residue chain is Small ribosomal subunit protein uS9 (130 aa).

This sequence belongs to the universal ribosomal protein uS9 family.

The protein is Small ribosomal subunit protein uS9 of Albidiferax ferrireducens (strain ATCC BAA-621 / DSM 15236 / T118) (Rhodoferax ferrireducens).